Consider the following 716-residue polypeptide: Mitogen-activated protein kinase kinase kinase 5 (716 aa).

Over residues 1 to 27 (MRWLPQISFSSPSSSPSSSLKPVASYS) the composition is skewed to low complexity. Disordered stretches follow at residues 1-42 (MRWL…DRFH), 74-98 (ASTS…VPRS), 119-180 (AANA…YWVN), and 238-302 (YDIT…VTNG). The segment covering 31–40 (DPDRNQDRDR) has biased composition (basic and acidic residues). Over residues 75–91 (STSSSTFDSGLTRSPSA) the composition is skewed to polar residues. Over residues 124–137 (GLDDRDRDPERLIS) the composition is skewed to basic and acidic residues. Polar residues-rich tracts occupy residues 138–150 (DRTS…TSVN), 162–173 (ENSSYQDFSPRN), and 242–251 (AFSTDNSPIH). Low complexity predominate over residues 263–273 (RSPQPSRPSSP). In terms of domain architecture, Protein kinase spans 346 to 607 (WKKGKLIGRG…ASMLLEHRFL (262 aa)). ATP contacts are provided by residues 352–360 (IGRGTFGSV) and Lys-375. The Proton acceptor role is filled by Asp-472. Residues 610–633 (SLQPTSPSNSDVSQLFNGMNITEP) are compositionally biased toward polar residues. Positions 610–716 (SLQPTSPSNS…RRTGVTSDHL (107 aa)) are disordered. 2 positions are modified to phosphoserine; by PBL27: Ser-617 and Ser-622. The span at 634–648 (SSRREKPNFKLDQVP) shows a compositional bias: basic and acidic residues. Composition is skewed to polar residues over residues 652 to 661 (NMTSSESESG) and 674 to 685 (LTGTVNRLSPRS). Ser-658 and Ser-660 each carry phosphoserine; by PBL27. At Thr-677 the chain carries Phosphothreonine; by PBL27. A Phosphoserine; by PBL27 modification is found at Ser-685. Positions 703-716 (SSDRRRTGVTSDHL) are enriched in basic and acidic residues.

It belongs to the protein kinase superfamily. STE Ser/Thr protein kinase family. MAP kinase kinase kinase subfamily. In terms of assembly, interacts with PBL27 at the plasma membrane; disassociation is induced by chitin perception by the CERK1 complex. Interacts with MKK2, MKK4, and MKK5 mainly in the cytosol. Post-translationally, phosphorylated by PBL27 during chitin-mediated signaling in a CERK1-dependent manner. In terms of tissue distribution, mostly expressed in flower buds. Also present in pollen, roots, leaves and seedlings, and, at low levels, in stems and immature siliques.

The protein localises to the cell membrane. It localises to the cytoplasm. Its subcellular location is the cytosol. It catalyses the reaction L-seryl-[protein] + ATP = O-phospho-L-seryl-[protein] + ADP + H(+). It carries out the reaction L-threonyl-[protein] + ATP = O-phospho-L-threonyl-[protein] + ADP + H(+). Its function is as follows. Mitogen-activated protein kinase (MAPK) involved in the transduction of signal between the host cell surface chitin receptor complex CERK1-LYK5 and the intracellular MAPK cascade that leads to chitin-induced immunity. Phosphorylates and activates MAPK targets (e.g. MKK4, MKK5, and possibly MKK2) when phosphorylated by PBL27 after elicitation by chitin. Required for resistance to the fungus A.brassicicola. This is Mitogen-activated protein kinase kinase kinase 5 from Arabidopsis thaliana (Mouse-ear cress).